A 501-amino-acid chain; its full sequence is Lysine--tRNA ligase (501 aa).

Residues glutamate 402 and glutamate 409 each contribute to the Mg(2+) site.

It belongs to the class-II aminoacyl-tRNA synthetase family. As to quaternary structure, homodimer. Mg(2+) is required as a cofactor.

It localises to the cytoplasm. The enzyme catalyses tRNA(Lys) + L-lysine + ATP = L-lysyl-tRNA(Lys) + AMP + diphosphate. This Helicobacter pylori (strain J99 / ATCC 700824) (Campylobacter pylori J99) protein is Lysine--tRNA ligase (lysS).